Consider the following 270-residue polypeptide: uncharacterized protein (270 aa).

Residue histidine 171 is the Proton donor of the active site. The active-site Nucleophile is cysteine 261.

This sequence belongs to the DDAH family.

This is an uncharacterized protein from Aeropyrum pernix (strain ATCC 700893 / DSM 11879 / JCM 9820 / NBRC 100138 / K1).